We begin with the raw amino-acid sequence, 275 residues long: Energy-coupling factor transporter ATP-binding protein EcfA1 (275 aa).

The 236-residue stretch at 5–240 (IDVKNLSFRY…NDLDQIGLDD (236 aa)) folds into the ABC transporter domain. Residue 40-47 (GHNGSGKS) coordinates ATP.

Belongs to the ABC transporter superfamily. Energy-coupling factor EcfA family. As to quaternary structure, forms a stable energy-coupling factor (ECF) transporter complex composed of 2 membrane-embedded substrate-binding proteins (S component), 2 ATP-binding proteins (A component) and 2 transmembrane proteins (T component).

Its subcellular location is the cell membrane. Functionally, ATP-binding (A) component of a common energy-coupling factor (ECF) ABC-transporter complex. Unlike classic ABC transporters this ECF transporter provides the energy necessary to transport a number of different substrates. This chain is Energy-coupling factor transporter ATP-binding protein EcfA1, found in Streptococcus pneumoniae serotype 4 (strain ATCC BAA-334 / TIGR4).